Here is a 402-residue protein sequence, read N- to C-terminus: Multidrug resistance protein MdtH (402 aa).

At 1 to 12 (MSRVSQARNLGK) the chain is on the cytoplasmic side. A helical transmembrane segment spans residues 13–33 (YFLLIDNMLVVLGFFVVFPLI). Topologically, residues 34–98 (SIRFVDQMGW…GFATMGIAHE (65 aa)) are periplasmic. Residues 99 to 116 (PWLLWFSCLLSGLGGTLF) traverse the membrane as a helical segment. Residues 117–138 (DPPRSALVVKLIRPQQRGRFFS) are Cytoplasmic-facing. The helical transmembrane segment at 139–159 (LLMMQDSAGAVIGALLGSWLL) threads the bilayer. Residues 160-164 (QYDFR) lie on the Periplasmic side of the membrane. The chain crosses the membrane as a helical span at residues 165–185 (LVCATGAVLFVLCAAFNAWLL). Topologically, residues 186–213 (PAWKLSTVRTPVREGMTRVMRDKRFVTY) are cytoplasmic. The chain crosses the membrane as a helical span at residues 214-234 (VLTLAGYYMLAVQVMLMLPIM). The Periplasmic segment spans residues 235–243 (VNDVAGAPS). A helical membrane pass occupies residues 244–264 (AVKWMYAIEACLSLTLLYPIA). Residues 265–276 (RWSEKHFRLEHR) are Cytoplasmic-facing. The helical transmembrane segment at 277-297 (LMAGLLIMSLSMMPVGMVSGL) threads the bilayer. The Periplasmic portion of the chain corresponds to 298–299 (QQ). A helical membrane pass occupies residues 300-320 (LFTLICLFYIGSIIAEPARET). The Cytoplasmic portion of the chain corresponds to 321–339 (LSASLADARARGSYMGFSR). Residues 340-360 (LGLAIGGAIGYIGGGWLFDLG) traverse the membrane as a helical segment. The Periplasmic segment spans residues 361–367 (KSAHQPE). A helical transmembrane segment spans residues 368–388 (LPWMMLGIIGIFTFLALGWQF). At 389–402 (SQKRTARRLLERDA) the chain is on the cytoplasmic side.

Belongs to the major facilitator superfamily. DHA1 family. MdtH (TC 2.A.1.2.21) subfamily.

The protein resides in the cell inner membrane. In terms of biological role, confers resistance to norfloxacin and enoxacin. This Escherichia coli O7:K1 (strain IAI39 / ExPEC) protein is Multidrug resistance protein MdtH.